A 302-amino-acid polypeptide reads, in one-letter code: UDP-N-acetylenolpyruvoylglucosamine reductase (302 aa).

In terms of domain architecture, FAD-binding PCMH-type spans 27 to 192 (KTGGPADYVA…VSVTFGLKPG (166 aa)). The active site involves Arg-171. Ser-221 functions as the Proton donor in the catalytic mechanism. The active site involves Glu-291.

This sequence belongs to the MurB family. FAD serves as cofactor.

It localises to the cytoplasm. It catalyses the reaction UDP-N-acetyl-alpha-D-muramate + NADP(+) = UDP-N-acetyl-3-O-(1-carboxyvinyl)-alpha-D-glucosamine + NADPH + H(+). The protein operates within cell wall biogenesis; peptidoglycan biosynthesis. Its function is as follows. Cell wall formation. The chain is UDP-N-acetylenolpyruvoylglucosamine reductase from Lactiplantibacillus plantarum (strain ATCC BAA-793 / NCIMB 8826 / WCFS1) (Lactobacillus plantarum).